The primary structure comprises 842 residues: Probable receptor-like protein kinase At5g61350 (842 aa).

Positions 1–27 (MGGDFRHFSSHVSLLLLFLLIVKSSSS) are cleaved as a signal peptide. The Extracellular segment spans residues 28-425 (FTPADNYLID…IGGMSSKKLA (398 aa)). 6 N-linked (GlcNAc...) asparagine glycosylation sites follow: asparagine 81, asparagine 125, asparagine 252, asparagine 294, asparagine 359, and asparagine 365. Residues 426–446 (IAGIGFVMALTAFLGVVVLLV) traverse the membrane as a helical segment. Residues 447–842 (RWQRRPKDWQ…EMQSPSHSIP (396 aa)) lie on the Cytoplasmic side of the membrane. Residues 525-803 (FDENAVCGVG…GDVLWNLEYA (279 aa)) enclose the Protein kinase domain. ATP contacts are provided by residues 531-539 (CGVGGFGKV) and lysine 553. Residue aspartate 655 is the Proton acceptor of the active site.

This sequence belongs to the protein kinase superfamily. Ser/Thr protein kinase family.

It localises to the membrane. The sequence is that of Probable receptor-like protein kinase At5g61350 from Arabidopsis thaliana (Mouse-ear cress).